The following is a 455-amino-acid chain: Pup--protein ligase (455 aa).

Glu10 provides a ligand contact to Mg(2+). Arg55 is an ATP binding site. Tyr57 is a binding site for Mg(2+). Residue Asp59 is the Proton acceptor of the active site. Glu65 serves as a coordination point for Mg(2+). The ATP site is built by Thr68 and Trp422.

It belongs to the Pup ligase/Pup deamidase family. Pup-conjugating enzyme subfamily.

It catalyses the reaction ATP + [prokaryotic ubiquitin-like protein]-L-glutamate + [protein]-L-lysine = ADP + phosphate + N(6)-([prokaryotic ubiquitin-like protein]-gamma-L-glutamyl)-[protein]-L-lysine.. The protein operates within protein degradation; proteasomal Pup-dependent pathway. It functions in the pathway protein modification; protein pupylation. In terms of biological role, catalyzes the covalent attachment of the prokaryotic ubiquitin-like protein modifier Pup to the proteasomal substrate proteins, thereby targeting them for proteasomal degradation. This tagging system is termed pupylation. The ligation reaction involves the side-chain carboxylate of the C-terminal glutamate of Pup and the side-chain amino group of a substrate lysine. The chain is Pup--protein ligase from Sanguibacter keddieii (strain ATCC 51767 / DSM 10542 / NCFB 3025 / ST-74).